The sequence spans 429 residues: E3 ubiquitin-protein ligase ZNRF4 (429 aa).

A signal peptide spans 1–27; the sequence is MLRCRPEPLMPRATRVAVAVSLPLSHA. The Lumenal segment spans residues 28-250; it reads VIPTQLPSHP…PPCRDLDCHP (223 aa). The disordered stretch occupies residues 30 to 64; the sequence is PTQLPSHPGHRPSGRPRRCPKAPCLPSPVGLSSTQ. A compositionally biased stretch (basic residues) spans 37–49; that stretch reads PGHRPSGRPRRCP. N152 carries N-linked (GlcNAc...) asparagine glycosylation. Positions 152-223 constitute a PA domain; that stretch reads NRSLGAIALI…VGEAASQDLR (72 aa). A helical membrane pass occupies residues 251–271; sequence VLTVSWALGRTLALVVSTLFV. Over 272–429 the chain is Cytoplasmic; it reads LNRLWLWAQA…SPAPPEAPGQ (158 aa). The segment at 309-352 adopts an RING-type; atypical zinc-finger fold; it reads CAICLDEYEEGDQLKILPCSHTYHCKCIDPWFSQAPRRSCPVCK. Disordered regions lie at residues 358–381 and 409–429; these read TEDS…GHRP and TTSL…APGQ. The span at 409–420 shows a compositional bias: polar residues; that stretch reads TTSLEAEDTTVS.

Interacts with CANX.

The protein resides in the endoplasmic reticulum membrane. It catalyses the reaction S-ubiquitinyl-[E2 ubiquitin-conjugating enzyme]-L-cysteine + [acceptor protein]-L-lysine = [E2 ubiquitin-conjugating enzyme]-L-cysteine + N(6)-ubiquitinyl-[acceptor protein]-L-lysine.. Its pathway is protein modification; protein ubiquitination. Functionally, E3 ubiquitin-protein ligase that acts as a negative regulator of NOD2 signaling by mediating ubiquitination and degradation of RIPK2. Also catalyzes ubiquitination and proteasomal degradation of CANX within the endoplasmic reticulum. Could have a role in spermatogenesis. In Macaca fascicularis (Crab-eating macaque), this protein is E3 ubiquitin-protein ligase ZNRF4 (ZNRF4).